Consider the following 1585-residue polypeptide: Histone acetyltransferase lsy-12 (1585 aa).

Disordered regions lie at residues 1-37 (MGKK…ARRE) and 279-491 (GPQH…DDPV). A compositionally biased stretch (basic and acidic residues) spans 23–37 (PKDRTARPTAAARRE). Residues 279-296 (GPQHENVTVSENVLSTES) show a composition bias toward polar residues. Over residues 302–312 (TETKRLHDSSR) the composition is skewed to basic and acidic residues. Polar residues-rich tracts occupy residues 355 to 364 (LLSNPHSTPV) and 411 to 426 (SRLS…SNDL). Residues 431 to 440 (SAPSSSSAAS) are compositionally biased toward low complexity. Residues 453-469 (QQRRKGNQSAARSRKIK) show a composition bias toward basic residues. Over residues 477 to 491 (QEDEPMELDSDDDPV) the composition is skewed to acidic residues. The MYST-type HAT domain maps to 544–830 (EQARLPERIH…YDPECLDWVP (287 aa)). The segment at 577–602 (LFICEFCFFYARSDEIMQNHAKKCML) adopts a C2HC MYST-type zinc-finger fold. An N6-acetyllysine; by autocatalysis modification is found at Lys644. 685 to 689 (SCIMT) contacts acetyl-CoA. Glu720 functions as the Proton donor/acceptor in the catalytic mechanism. Acetyl-CoA is bound by residues Ser724 and Lys815. 2 stretches are compositionally biased toward basic and acidic residues: residues 844 to 855 (SKEEIEQDEQRR) and 947 to 956 (VLDKSNIREE). Disordered regions lie at residues 844–903 (SKEE…LKHE), 927–1262 (EENK…IGKS), 1286–1373 (ESTA…ASNH), and 1431–1507 (HHQF…VHPQ). The span at 977–999 (NKCNNTESEPNPSGRKTSATSSG) shows a compositional bias: polar residues. Positions 1011–1022 (TEEEEEDDDPTD) are enriched in acidic residues. Basic and acidic residues predominate over residues 1029–1046 (DDEKPFETSVNKEKNEKS). Over residues 1047-1060 (RRGKKVSKKRRSVA) the composition is skewed to basic residues. 2 stretches are compositionally biased toward basic and acidic residues: residues 1070-1081 (VRDRDEPKKAEN) and 1135-1151 (DIPK…AYDR). Low complexity predominate over residues 1164–1173 (PTPDSYHSSP). A compositionally biased stretch (polar residues) spans 1185–1194 (LMQAQQNIYQ). Residues 1196 to 1207 (NDCHFAENDSKP) show a composition bias toward basic and acidic residues. Composition is skewed to polar residues over residues 1298–1317 (AGPS…NTTP) and 1324–1333 (HPNSQQQATP). Residues 1482 to 1493 (QHQQQQPQQPQQ) are compositionally biased toward low complexity.

Belongs to the MYST (SAS/MOZ) family.

It catalyses the reaction L-lysyl-[protein] + acetyl-CoA = N(6)-acetyl-L-lysyl-[protein] + CoA + H(+). Functionally, probable histone acetyltransferase. Required to initiate and then maintain lateralized gene expression in the ASE sensory neurons. Involved in determining cell fate in the ASE neurons. The protein is Histone acetyltransferase lsy-12 of Caenorhabditis elegans.